A 319-amino-acid polypeptide reads, in one-letter code: Inositol-tetrakisphosphate 1-kinase 1 (319 aa).

N-acetylserine is present on S2. 2 residues coordinate 1D-myo-inositol 1,3,4-trisphosphate: K18 and K60. ATP-binding residues include R95 and K145. Positions 99–318 (LEVITQLRFP…FWDMVTKKNH (220 aa)) constitute an ATP-grasp domain. 1D-myo-inositol 1,3,4-trisphosphate contacts are provided by H156 and K188. ATP is bound by residues 177 to 188 (QEFVNHGGVIFK) and S203. Mg(2+)-binding residues include D273, D288, and N290. Residue N290 participates in 1D-myo-inositol 1,3,4-trisphosphate binding.

The protein belongs to the ITPK1 family. Monomer. It depends on Mg(2+) as a cofactor. Expressed in siliques.

It catalyses the reaction 1D-myo-inositol 3,4,5,6-tetrakisphosphate + ATP = 1D-myo-inositol 1,3,4,5,6-pentakisphosphate + ADP + H(+). The catalysed reaction is 1D-myo-inositol 1,3,4-trisphosphate + ATP = 1D-myo-inositol 1,3,4,5-tetrakisphosphate + ADP + H(+). The enzyme catalyses 1D-myo-inositol 1,3,4-trisphosphate + ATP = 1D-myo-inositol 1,3,4,6-tetrakisphosphate + ADP + H(+). In terms of biological role, kinase that can phosphorylate various inositol polyphosphate such as Ins(3,4,5,6)P4 or Ins(1,3,4)P3. Phosphorylates Ins(3,4,5,6)P4 at position 1 to form Ins(1,3,4,5,6)P5. This reaction is thought to have regulatory importance, since Ins(3,4,5,6)P4 is an inhibitor of plasma membrane Ca(2+)-activated Cl(-) channels, while Ins(1,3,4,5,6)P5 is not. Also phosphorylates Ins(1,3,4)P3 on O-5 and O-6 to form Ins(1,3,4,6)P4, an essential molecule in the hexakisphosphate (InsP6) pathway. The chain is Inositol-tetrakisphosphate 1-kinase 1 (ITPK1) from Arabidopsis thaliana (Mouse-ear cress).